We begin with the raw amino-acid sequence, 718 residues long: Coiled-coil domain-containing protein 157 (718 aa).

The stretch at 300–603 forms a coiled coil; sequence LRAQLEDAEG…LTKIREVAQQ (304 aa). Residues 469–482 are compositionally biased toward basic and acidic residues; sequence RGSLDEAEAQRSEL. Disordered regions lie at residues 469–490 and 617–690; these read RGSL…QSLQ and PPYK…TQNP. Residues 639–659 are compositionally biased toward low complexity; that stretch reads TGRRQSPGSRTSSTGRTHPGG.

The protein is Coiled-coil domain-containing protein 157 (Ccdc157) of Mus musculus (Mouse).